Reading from the N-terminus, the 898-residue chain is Protein translocase subunit SecA (898 aa).

Residues Q87, 105–109, and D512 contribute to the ATP site; that span reads GEGKT. The span at 855–865 shows a compositional bias: polar residues; sequence MQYQNNEGTSS. The tract at residues 855–898 is disordered; that stretch reads MQYQNNEGTSSLHEKSEHKIGRNESCPCGSGKKYKHCHGSKAKY. Over residues 866-876 the composition is skewed to basic and acidic residues; the sequence is LHEKSEHKIGR. Residues C880, C882, C891, and H892 each coordinate Zn(2+). Over residues 886-898 the composition is skewed to basic residues; that stretch reads KKYKHCHGSKAKY.

The protein belongs to the SecA family. As to quaternary structure, monomer and homodimer. Part of the essential Sec protein translocation apparatus which comprises SecA, SecYEG and auxiliary proteins SecDF-YajC and YidC. The cofactor is Zn(2+).

The protein localises to the cell inner membrane. It is found in the cytoplasm. The enzyme catalyses ATP + H2O + cellular proteinSide 1 = ADP + phosphate + cellular proteinSide 2.. Functionally, part of the Sec protein translocase complex. Interacts with the SecYEG preprotein conducting channel. Has a central role in coupling the hydrolysis of ATP to the transfer of proteins into and across the cell membrane, serving both as a receptor for the preprotein-SecB complex and as an ATP-driven molecular motor driving the stepwise translocation of polypeptide chains across the membrane. The polypeptide is Protein translocase subunit SecA (Histophilus somni (strain 129Pt) (Haemophilus somnus)).